A 1481-amino-acid chain; its full sequence is MQRSPLEKASVISKLFFSWTRPILRKGYRQRLELSDIYQIPSADSADNLSEKLEREWDRELVSKKNPKLINALRRCFFWRFMFYGIILYLGEVTKAVQPLLLGRIIASYDPDNEAERSIAIYLGIGLCLLFIVRTLLLHPAIFGLHHIGMQMRIAMFSLIYKKTLKLSSRVLDKISIGQLVSLLSNNLNKFDEGLALAHFVWIAPLQVTLLMGLLWDLLQASAFCGLAFLIVLALFQAGLGRMMMKYRDQRAGKINERLVITSEMIENIQSVKAYCWEEAMEKMIENLRQTELKLTRKAAYVRYFNSSAFFFSGFFVVFLSVLPYALIKGIVLRRIFTTISFCIVLRMAVTRQFPWAVQTWYDSLGAINKIQDFLQKQEYKTLEYNLTTTEVVMENVTAFWEEGFGELFEKAKQNNDRKISNGDNSLFFSNFSLLGTPVLKDISFKIERGQLLAVAGSTGAGKTSLLMMIMGELEPSEGKIKHSGRISFCSQFSWIMPGTIKENIIFGVSYDEYRYRSVIKACQLEEDISKFAEKDNIVLGEGGIQLSGGQRARISLARAVYKDADLYLLDSPFGYLDVLTEKEIFESCVCKLMANKTRILVTSKMEHLKKADKILILHEGSSYFYGTFSELQNLRPDFSSKLMGYDSFDQFSAERRNSILTETLRRFSLEGDATVSWNETKKQSFKQTGEFGDKRKNSILNPINSIRKFSIVQKTPLQMNGIEEDSDEPLERRLSLVPDSEQGEAILPRSNVINTGPTFQRRRRQSVLNLMTRSSVNQGQSIHRKTATSTRKMSLAPQANLTEMDIYSRRLSQDSGLEISEEINEDDLKECFFDDVESIPTVTTWNTYLRYITIHKSLIFVLIWCLVIFLAEVAASLVVLWLLKETPPQDSGNSTKGANNSYAVIITSTSSYYVFYIYVGVADTLLALGLFRGLPLVHTLITVSKILHHKMLHSVLQAPMSTLNTLKAGGILNRFSKDMAILDDLLPLTIFDFIQLLLIVIGAVAVVSVLQPYIFLATVPVIAAFIILRAYFLHTSQQLKQLESEGRSPIFTHLVTSLKGLWTLRAFGRQPYFETLFHKALNLHTANWFLYLSTLRWFQMRIEMIFVIFFIAVTFISILTTGEGEGTVGIILTLAMNIMSTLQWAVNSSIDVDSLMRSVSRVFKFIDMPTEDSKPTKSVKPSKDGQLSKVMIIENQYVKKDDIWPSGGQMTVKDLTAKYTDGGNAILENISFSISPGQRVGLLGRTGSGKSTLLSAFLRLLNTEGEIQIDGVSWDSITLQQWRKAFGVIPQKVFIFSGTFRKNLDPYGQWNDQEIWKVADEVGLRSVIEQFPGKLDFVLVDGGNVLSHGHKQLICLARSVLSKAKILLLDEPSAHLDPITYQIIRRTLKQAFADCTVILSEHRIEAMLECQRFLVIEENKVRQYDSIQKLLSEKSLFQQAISSSDPLKLFPHRNSSKHKSRSKIAALQEETEEEVQETRL.

The Cytoplasmic segment spans residues 1 to 77 (MQRSPLEKAS…KLINALRRCF (77 aa)). A helical membrane pass occupies residues 78–98 (FWRFMFYGIILYLGEVTKAVQ). Residues 81–365 (FMFYGIILYL…WAVQTWYDSL (285 aa)) form the ABC transmembrane type-1 1 domain. At 99 to 122 (PLLLGRIIASYDPDNEAERSIAIY) the chain is on the extracellular side. The chain crosses the membrane as a helical span at residues 123-146 (LGIGLCLLFIVRTLLLHPAIFGLH). The Cytoplasmic segment spans residues 147-195 (HIGMQMRIAMFSLIYKKTLKLSSRVLDKISIGQLVSLLSNNLNKFDEGL). A helical membrane pass occupies residues 196–216 (ALAHFVWIAPLQVTLLMGLLW). Residues 217 to 222 (DLLQAS) are Extracellular-facing. The helical transmembrane segment at 223–243 (AFCGLAFLIVLALFQAGLGRM) threads the bilayer. The Cytoplasmic portion of the chain corresponds to 244–298 (MMKYRDQRAGKINERLVITSEMIENIQSVKAYCWEEAMEKMIENLRQTELKLTRK). The chain crosses the membrane as a helical span at residues 299 to 319 (AAYVRYFNSSAFFFSGFFVVF). At 320–339 (LSVLPYALIKGIVLRRIFTT) the chain is on the extracellular side. Residues 340–358 (ISFCIVLRMAVTRQFPWAV) traverse the membrane as a helical segment. Residues 359-858 (QTWYDSLGAI…YLRYITIHKS (500 aa)) are Cytoplasmic-facing. Residues Trp-401, Ser-433, 457 to 464 (GSTGAGKT), and Gln-492 contribute to the ATP site. The ABC transporter 1 domain maps to 422-645 (NGDNSLFFSN…RPDFSSKLMG (224 aa)). Cys-523 carries the S-palmitoyl cysteine lipid modification. 2 positions are modified to phosphoserine: Ser-548 and Ser-659. Residues 653-831 (SAERRNSILT…EEINEDDLKE (179 aa)) form a disordered R region region. A Phosphoserine; by PKA modification is found at Ser-669. Ser-685 is subject to Phosphoserine. A Glycyl lysine isopeptide (Lys-Gly) (interchain with G-Cter in ubiquitin) cross-link involves residue Lys-687. Residues Ser-699 and Ser-711 each carry the phosphoserine modification. Thr-716 carries the phosphothreonine modification. Phosphoserine is present on residues Ser-736, Ser-767, Ser-790, Ser-795, and Ser-813. Residues 859–879 (LIFVLIWCLVIFLAEVAASLV) form a helical membrane-spanning segment. The ABC transmembrane type-1 2 domain occupies 859-1155 (LIFVLIWCLV…AVNSSIDVDS (297 aa)). The Extracellular segment spans residues 880–918 (VLWLLKETPPQDSGNSTKGANNSYAVIITSTSSYYVFYI). N-linked (GlcNAc...) asparagine glycosylation is found at Asn-894 and Asn-900. Residues 919–939 (YVGVADTLLALGLFRGLPLVH) traverse the membrane as a discontinuously helical segment. Topologically, residues 940–990 (TLITVSKILHHKMLHSVLQAPMSTLNTLKAGGILNRFSKDMAILDDLLPLT) are cytoplasmic. A helical membrane pass occupies residues 991–1011 (IFDFIQLLLIVIGAVAVVSVL). Residues 1012–1013 (QP) lie on the Extracellular side of the membrane. The chain crosses the membrane as a helical span at residues 1014 to 1034 (YIFLATVPVIAAFIILRAYFL). Residues 1035-1095 (HTSQQLKQLE…TANWFLYLST (61 aa)) are Cytoplasmic-facing. A helical membrane pass occupies residues 1096-1116 (LRWFQMRIEMIFVIFFIAVTF). The Extracellular portion of the chain corresponds to 1117 to 1130 (ISILTTGEGEGTVG). A helical transmembrane segment spans residues 1131-1151 (IILTLAMNIMSTLQWAVNSSI). The Cytoplasmic portion of the chain corresponds to 1152–1481 (DVDSLMRSVS…TEEEVQETRL (330 aa)). The ABC transporter 2 domain maps to 1211 to 1444 (MTVKDLTAKY…KSLFQQAISS (234 aa)). Residues Tyr-1220 and 1245–1252 (GRTGSGKS) each bind ATP. An interaction with GORASP2 region spans residues 1387–1481 (RTLKQAFADC…TEEEVQETRL (95 aa)). Residue Cys-1396 is the site of S-palmitoyl cysteine attachment. A phosphoserine mark is found at Ser-1445 and Ser-1457. The disordered stretch occupies residues 1449 to 1481 (KLFPHRNSSKHKSRSKIAALQEETEEEVQETRL). The segment covering 1451–1463 (FPHRNSSKHKSRS) has biased composition (basic residues). Over residues 1470–1481 (EETEEEVQETRL) the composition is skewed to acidic residues. Residues 1479–1481 (TRL) carry the PDZ-binding motif.

The protein belongs to the ABC transporter superfamily. ABCC family. CFTR transporter (TC 3.A.1.202) subfamily. As to quaternary structure, monomer; does not require oligomerization for channel activity. May form oligomers in the membrane. Interacts with SLC26A3, SLC26A6 and NHERF1. Interacts with SHANK2. Interacts with MYO6. Interacts (via C-terminus) with GOPC (via PDZ domain); this promotes CFTR internalization and thereby decreases channel activity. Interacts with SLC4A7 through NHERF1. Found in a complex with MYO5B and RAB11A. Interacts with ANO1. Interacts with SLC26A8. Interacts with AHCYL1; the interaction increases CFTR activity. Interacts with CSE1L. The core-glycosylated form interacts with GORASP2 (via PDZ GRASP-type 1 domain) in respone to ER stress. Interacts with MARCHF2; the interaction leads to CFTR ubiqtuitination and degradation. Interacts with ADGRG2. In terms of processing, N-glycosylated. Phosphorylated; cAMP treatment promotes phosphorylation and activates the channel. Dephosphorylation decreases the ATPase activity (in vitro). Phosphorylation at PKA sites activates the channel. Phosphorylation at PKC sites enhances the response to phosphorylation by PKA. Phosphorylated by AMPK; this inhibits channel activity. Post-translationally, ubiquitinated, leading to its degradation in the lysosome. Deubiquitination by USP10 in early endosomes enhances its endocytic recycling to the cell membrane. Ubiquitinated by RNF185 during ER stress. Ubiquitinated by MARCHF2.

It is found in the apical cell membrane. It localises to the early endosome membrane. Its subcellular location is the cell membrane. The protein resides in the recycling endosome membrane. The protein localises to the endoplasmic reticulum membrane. It is found in the nucleus. The catalysed reaction is ATP + H2O + closed Cl(-) channel = ADP + phosphate + open Cl(-) channel.. It catalyses the reaction chloride(in) = chloride(out). The enzyme catalyses hydrogencarbonate(in) = hydrogencarbonate(out). It carries out the reaction ATP + H2O = ADP + phosphate + H(+). Its function is as follows. Epithelial ion channel that plays an important role in the regulation of epithelial ion and water transport and fluid homeostasis. Mediates the transport of chloride ions across the cell membrane. Possesses an intrinsic ATPase activity and utilizes ATP to gate its channel; the passive flow of anions through the channel is gated by cycles of ATP binding and hydrolysis by the ATP-binding domains. The ion channel is also permeable to HCO(3)(-); selectivity depends on the extracellular chloride concentration. Exerts its function also by modulating the activity of other ion channels and transporters. Contributes to the regulation of the pH and the ion content of the epithelial fluid layer. Modulates the activity of the epithelial sodium channel (ENaC) complex, in part by regulating the cell surface expression of the ENaC complex. May regulate bicarbonate secretion and salvage in epithelial cells by regulating the transporter SLC4A7. Can inhibit the chloride channel activity of ANO1. Plays a role in the chloride and bicarbonate homeostasis during sperm epididymal maturation and capacitation. The polypeptide is Cystic fibrosis transmembrane conductance regulator (Equus caballus (Horse)).